Consider the following 509-residue polypeptide: Lengsin (509 aa).

The tract at residues 1 to 34 (MNNEEDLLQEDSTRDEGNETEANSMNTLRRTRKK) is disordered. In terms of domain architecture, GS beta-grasp spans 83-177 (NRLQFVRFEA…VICDTFTVTG (95 aa)). One can recognise a GS catalytic domain in the interval 184-509 (PRYIAKRQLS…ERNKFLEYFI (326 aa)).

The protein belongs to the glutamine synthetase family. In terms of assembly, dodecamer. Interacts with BFSP2 and VIM. In terms of tissue distribution, abundantly expressed in lens.

Its function is as follows. May act as a component of the cytoskeleton or as a chaperone for the reorganization of intermediate filament proteins during terminal differentiation in the lens. Does not seem to have enzymatic activity. This Homo sapiens (Human) protein is Lengsin (LGSN).